The following is a 1674-amino-acid chain: E3 ubiquitin-protein ligase SHPRH (1674 aa).

The interval 1-26 (MSSRRKRAPPMKVDEERQQQLHWNMH) is disordered. The segment covering 12-26 (KVDEERQQQLHWNMH) has biased composition (basic and acidic residues). A phosphoserine mark is found at S259 and S261. Residues 302–384 (YQREAVNWML…TVEVLALILT (83 aa)) form the Helicase ATP-binding; first part domain. 368-375 (DEMGLGKT) is a binding site for ATP. The H15 domain occupies 433-507 (HCPPTRVMIL…GFSGTFTLGK (75 aa)). The interval 524-548 (SPRKIEKELRKSVNKDADSEYLPSN) is disordered. Positions 526-541 (RKIEKELRKSVNKDAD) are enriched in basic and acidic residues. S626 bears the Phosphoserine mark. Residues 649–700 (RFECICGEFDQIGHKPRVQCLKCHLWQHAKCVNYEEKNLKVKPFYCPHCLVA) form a PHD-type zinc finger. A Helicase ATP-binding; second part domain is found at 701–859 (MEPVSTRATL…FGLVVFLGIE (159 aa)). Residues 810-813 (DEAQ) carry the DEAQ box motif. The RING-type zinc-finger motif lies at 1423–1470 (CPICARQLGKQWAVLTCGHCFCNECTSIIIEQYSVGSHRSSIKCAICR). The 159-residue stretch at 1505–1663 (AVVRTLMKIQ…ASVLTVAGLA (159 aa)) folds into the Helicase C-terminal domain.

The protein belongs to the SNF2/RAD54 helicase family. In terms of assembly, homodimer. Interacts with HLTF, PCNA, UBE2N and RAD18. In terms of tissue distribution, broadly expressed (at protein level).

It carries out the reaction S-ubiquitinyl-[E2 ubiquitin-conjugating enzyme]-L-cysteine + [acceptor protein]-L-lysine = [E2 ubiquitin-conjugating enzyme]-L-cysteine + N(6)-ubiquitinyl-[acceptor protein]-L-lysine.. The protein operates within protein modification; protein ubiquitination. Its function is as follows. E3 ubiquitin-protein ligase involved in DNA repair. Upon genotoxic stress, accepts ubiquitin from the UBE2N-UBE2V2 E2 complex and transfers it to 'Lys-164' of PCNA which had been monoubiquitinated by UBE2A/B-RAD18, promoting the formation of non-canonical poly-ubiquitin chains linked through 'Lys-63'. The chain is E3 ubiquitin-protein ligase SHPRH (Shprh) from Mus musculus (Mouse).